The chain runs to 359 residues: Phospho-N-acetylmuramoyl-pentapeptide-transferase (359 aa).

10 helical membrane passes run 3–23 (QILI…PVLI), 55–75 (VAII…GVLM), 84–104 (GLLV…DDLI), 117–137 (TAKT…ALQF), 156–176 (IATV…VVSA), 190–210 (LAAG…FWQF), 231–251 (LAII…WNAA), 255–275 (IFMG…LSVT), 283–303 (VVLG…ILAF), and 330–350 (VIIR…ALFY).

The protein belongs to the glycosyltransferase 4 family. MraY subfamily. Mg(2+) is required as a cofactor.

The protein localises to the cell membrane. The enzyme catalyses UDP-N-acetyl-alpha-D-muramoyl-L-alanyl-gamma-D-glutamyl-meso-2,6-diaminopimeloyl-D-alanyl-D-alanine + di-trans,octa-cis-undecaprenyl phosphate = di-trans,octa-cis-undecaprenyl diphospho-N-acetyl-alpha-D-muramoyl-L-alanyl-D-glutamyl-meso-2,6-diaminopimeloyl-D-alanyl-D-alanine + UMP. It participates in cell wall biogenesis; peptidoglycan biosynthesis. In terms of biological role, catalyzes the initial step of the lipid cycle reactions in the biosynthesis of the cell wall peptidoglycan: transfers peptidoglycan precursor phospho-MurNAc-pentapeptide from UDP-MurNAc-pentapeptide onto the lipid carrier undecaprenyl phosphate, yielding undecaprenyl-pyrophosphoryl-MurNAc-pentapeptide, known as lipid I. The polypeptide is Phospho-N-acetylmuramoyl-pentapeptide-transferase (Mycolicibacterium gilvum (strain PYR-GCK) (Mycobacterium gilvum (strain PYR-GCK))).